The primary structure comprises 348 residues: MIPATYTLSQITARLGGEWRGEDISVTAVRPLADAQAEHISFLANPKYKAEVHDSSAGAVIVSAKAADGFEGRNLIVADDPYLYFAKVARLFSPVVKARGGIHPTAVVEPGATVPTSCEIGANVYIGANTVLGEGCRILANAVVQHDCKLGDEVVLHPNAVVYYGCTLGRRVEIHSGAVIGADGFGLAFADDSWFKIPQTGAVTLGDDVEIGSNTNIDRGAMSDTTVGNGTKIDNQVQIGHNCKIGSHTVIAAKTGISGSVTIGSYCIIGGGVGTVGHIEIADKTTIGGGTSVTHSITESGKHLAGIFPMSTHKEWARNAVYIHRLSEMNKRLKTLEQQLSDAGQDSK.

His-241 functions as the Proton acceptor in the catalytic mechanism.

This sequence belongs to the transferase hexapeptide repeat family. LpxD subfamily. As to quaternary structure, homotrimer.

The catalysed reaction is a UDP-3-O-[(3R)-3-hydroxyacyl]-alpha-D-glucosamine + a (3R)-hydroxyacyl-[ACP] = a UDP-2-N,3-O-bis[(3R)-3-hydroxyacyl]-alpha-D-glucosamine + holo-[ACP] + H(+). It functions in the pathway bacterial outer membrane biogenesis; LPS lipid A biosynthesis. Catalyzes the N-acylation of UDP-3-O-acylglucosamine using 3-hydroxyacyl-ACP as the acyl donor. Is involved in the biosynthesis of lipid A, a phosphorylated glycolipid that anchors the lipopolysaccharide to the outer membrane of the cell. The polypeptide is UDP-3-O-acylglucosamine N-acyltransferase (Neisseria meningitidis serogroup B (strain ATCC BAA-335 / MC58)).